Reading from the N-terminus, the 782-residue chain is cGMP-specific 3',5'-cyclic phosphodiesterase gamma (782 aa).

Topologically, residues M1–Y69 are cytoplasmic. Residues V70–G90 traverse the membrane as a helical segment. Topologically, residues N91–S97 are extracellular. A helical transmembrane segment spans residues V98 to L118. The Cytoplasmic segment spans residues T119–E135. A helical transmembrane segment spans residues I136–F156. At N157–K181 the chain is on the extracellular side. A helical membrane pass occupies residues I182–P202. The Cytoplasmic segment spans residues C203–S208. The helical transmembrane segment at C209–I229 threads the bilayer. At T230–N239 the chain is on the extracellular side. A helical transmembrane segment spans residues I240–I260. At E261–L782 the chain is on the cytoplasmic side. The disordered stretch occupies residues G376–G396. The span at P381–V390 shows a compositional bias: acidic residues. The PDEase domain maps to Y423–E751. H504 (proton donor) is an active-site residue. Residue H504 to H508 coordinates a nucleoside 3',5'-cyclic phosphate. H508, H544, D545, and D654 together coordinate a divalent metal cation. A nucleoside 3',5'-cyclic phosphate is bound by residues D545, D654, and Q706.

The protein belongs to the cyclic nucleotide phosphodiesterase family. The cofactor is a divalent metal cation.

It is found in the membrane. Its subcellular location is the endoplasmic reticulum membrane. The enzyme catalyses 3',5'-cyclic GMP + H2O = GMP + H(+). It participates in purine metabolism; 3',5'-cyclic GMP degradation; GMP from 3',5'-cyclic GMP: step 1/1. Specifically hydrolyzes the second messenger cGMP, which is a key regulator of many important physiological processes. Probably by regulating cGMP levels, required for sporozoite motility and invasion of the mosquito salivary glands. In Plasmodium yoelii, this protein is cGMP-specific 3',5'-cyclic phosphodiesterase gamma.